We begin with the raw amino-acid sequence, 586 residues long: Arginine--tRNA ligase (586 aa).

Positions 128-138 match the 'HIGH' region motif; that stretch reads ANPTGPLHVGH.

Belongs to the class-I aminoacyl-tRNA synthetase family. As to quaternary structure, monomer.

It localises to the cytoplasm. The enzyme catalyses tRNA(Arg) + L-arginine + ATP = L-arginyl-tRNA(Arg) + AMP + diphosphate. The chain is Arginine--tRNA ligase from Coxiella burnetii (strain RSA 331 / Henzerling II).